The sequence spans 201 residues: Putative manganese efflux pump MntP (201 aa).

Helical transmembrane passes span 3 to 23, 39 to 59, 65 to 85, 116 to 136, 141 to 161, and 176 to 196; these read LVSI…VSIT, IGLF…SIGI, IAAL…GKMI, LTLL…SFAF, IINT…IGVM, and ILGG…HTNI.

It belongs to the MntP (TC 9.B.29) family.

It is found in the cell membrane. In terms of biological role, probably functions as a manganese efflux pump. The sequence is that of Putative manganese efflux pump MntP from Clostridium botulinum (strain Loch Maree / Type A3).